The sequence spans 776 residues: Transcription activator of gluconeogenesis HCAG_03671 (776 aa).

Positions 1 to 70 (MTASTQNGSP…NAKDPLRPRR (70 aa)) are disordered. Composition is skewed to polar residues over residues 21–41 (NQES…QSPA) and 50–60 (ENGQKHTSTAA). The segment at residues 77 to 105 (CFACQRAHLTCGDERPCQRCIKRGLQDAC) is a DNA-binding region (zn(2)-C6 fungal-type). Disordered stretches follow at residues 140–159 (RTNA…KDSR), 179–248 (TQAK…PFGA), 286–351 (GAGD…NIYN), 556–593 (NLNV…GGGG), and 651–726 (REAQ…SPKQ). The segment covering 142–155 (NASQQQNGPNSNSN) has biased composition (low complexity). Residues 195 to 217 (MQDTSINPSAFQAPSPTSTPNFD) show a composition bias toward polar residues. A compositionally biased stretch (low complexity) spans 218-229 (LSSNPPNRNLSS). Composition is skewed to polar residues over residues 230–244 (AMTQ…QTQD), 292–322 (PSDS…NTQP), 334–351 (WNPS…NIYN), and 557–576 (LNVN…TPRN). Residues 657-669 (GPDGKGGGGGGGD) show a composition bias toward gly residues. Low complexity predominate over residues 670–714 (VATTAATTSTSTSNGANSSGHANANRNNTNPNNSSPPSSSSAAAA).

It belongs to the ERT1/acuK family.

The protein resides in the nucleus. Its function is as follows. Transcription factor which regulates nonfermentable carbon utilization. Activator of gluconeogenetic genes. This chain is Transcription activator of gluconeogenesis HCAG_03671, found in Ajellomyces capsulatus (strain NAm1 / WU24) (Darling's disease fungus).